Here is a 238-residue protein sequence, read N- to C-terminus: Uridylate kinase (238 aa).

An ATP-binding site is contributed by 12-15 (KLSG). G54 provides a ligand contact to UMP. ATP is bound by residues G55 and R59. Residues D74 and 135–142 (TGNPYFTT) each bind UMP. T162, N163, Y168, and D171 together coordinate ATP.

Belongs to the UMP kinase family. In terms of assembly, homohexamer.

It localises to the cytoplasm. It carries out the reaction UMP + ATP = UDP + ADP. Its pathway is pyrimidine metabolism; CTP biosynthesis via de novo pathway; UDP from UMP (UMPK route): step 1/1. Inhibited by UTP. Functionally, catalyzes the reversible phosphorylation of UMP to UDP. In Nitrobacter winogradskyi (strain ATCC 25391 / DSM 10237 / CIP 104748 / NCIMB 11846 / Nb-255), this protein is Uridylate kinase.